The chain runs to 809 residues: Leucine--tRNA ligase (809 aa).

The 'HIGH' region motif lies at 40-50; that stretch reads PYPSGRIHMGH. The 'KMSKS' region motif lies at 579-583; sequence KMSKS. An ATP-binding site is contributed by Lys-582.

The protein belongs to the class-I aminoacyl-tRNA synthetase family.

The protein localises to the cytoplasm. The enzyme catalyses tRNA(Leu) + L-leucine + ATP = L-leucyl-tRNA(Leu) + AMP + diphosphate. This is Leucine--tRNA ligase from Campylobacter jejuni (strain RM1221).